A 212-amino-acid polypeptide reads, in one-letter code: Maleylacetoacetate isomerase (212 aa).

A GST N-terminal domain is found at 1–83 (MKLYTYYRST…YLEERYPQPA (83 aa)). The GST C-terminal domain occupies 88 to 211 (DPLRRARERG…HPANQPDTPA (124 aa)).

Belongs to the GST superfamily. Zeta family.

It carries out the reaction 4-maleylacetoacetate = 4-fumarylacetoacetate. It functions in the pathway amino-acid degradation; L-phenylalanine degradation; acetoacetate and fumarate from L-phenylalanine: step 5/6. This is Maleylacetoacetate isomerase (maiA) from Pseudomonas aeruginosa (strain ATCC 15692 / DSM 22644 / CIP 104116 / JCM 14847 / LMG 12228 / 1C / PRS 101 / PAO1).